Here is a 189-residue protein sequence, read N- to C-terminus: Peptidyl-tRNA hydrolase (189 aa).

H14 is a binding site for tRNA. The Proton acceptor role is filled by H19. TRNA-binding residues include Y64, N66, and N112.

The protein belongs to the PTH family. Monomer.

It localises to the cytoplasm. The catalysed reaction is an N-acyl-L-alpha-aminoacyl-tRNA + H2O = an N-acyl-L-amino acid + a tRNA + H(+). Its function is as follows. Hydrolyzes ribosome-free peptidyl-tRNAs (with 1 or more amino acids incorporated), which drop off the ribosome during protein synthesis, or as a result of ribosome stalling. Functionally, catalyzes the release of premature peptidyl moieties from peptidyl-tRNA molecules trapped in stalled 50S ribosomal subunits, and thus maintains levels of free tRNAs and 50S ribosomes. This chain is Peptidyl-tRNA hydrolase, found in Chlorobium phaeobacteroides (strain BS1).